We begin with the raw amino-acid sequence, 123 residues long: Small ribosomal subunit protein uS12 (123 aa).

D89 is modified (3-methylthioaspartic acid).

Belongs to the universal ribosomal protein uS12 family. As to quaternary structure, part of the 30S ribosomal subunit. Contacts proteins S8 and S17. May interact with IF1 in the 30S initiation complex.

Its function is as follows. With S4 and S5 plays an important role in translational accuracy. Interacts with and stabilizes bases of the 16S rRNA that are involved in tRNA selection in the A site and with the mRNA backbone. Located at the interface of the 30S and 50S subunits, it traverses the body of the 30S subunit contacting proteins on the other side and probably holding the rRNA structure together. The combined cluster of proteins S8, S12 and S17 appears to hold together the shoulder and platform of the 30S subunit. The protein is Small ribosomal subunit protein uS12 of Desulfovibrio desulfuricans (strain ATCC 27774 / DSM 6949 / MB).